We begin with the raw amino-acid sequence, 437 residues long: Na(+)/H(+) antiporter NhaA (437 aa).

11 consecutive transmembrane segments (helical) span residues 29 to 49 (TAGIILLLSTLLALGLANTAW), 74 to 94 (LKHWINDGLMTFFFFVIALEL), 111 to 131 (LPVAAALGGMAAPAGIYLLLV), 139 to 159 (GWGTVMSTDTAFVIGCLALLG), 168 to 188 (LFLLSLAIFDDIGAILIVAVG), 196 to 216 (VALGTGGLGFAFVAGIALLGI), 229 to 249 (IWLAFDASGVHATLVGVILGL), 307 to 327 (IALHPWVAFAIMPLFAVSNAG), 341 to 361 (IAIVVAFVVGKPAGIVLFSFL), 376 to 396 (WSLLAAGSLLTGIGFTMALFI), and 411 to 431 (LGVLGASVISAALGFMALTLL).

The protein belongs to the NhaA Na(+)/H(+) (TC 2.A.33) antiporter family.

It is found in the cell inner membrane. The catalysed reaction is Na(+)(in) + 2 H(+)(out) = Na(+)(out) + 2 H(+)(in). In terms of biological role, na(+)/H(+) antiporter that extrudes sodium in exchange for external protons. The sequence is that of Na(+)/H(+) antiporter NhaA from Rhizobium meliloti (strain 1021) (Ensifer meliloti).